The primary structure comprises 443 residues: ATP-dependent protease ATPase subunit HslU (443 aa).

Residues valine 18, glycine 60 to glutamate 65, aspartate 255, glutamate 321, and arginine 393 contribute to the ATP site.

This sequence belongs to the ClpX chaperone family. HslU subfamily. As to quaternary structure, a double ring-shaped homohexamer of HslV is capped on each side by a ring-shaped HslU homohexamer. The assembly of the HslU/HslV complex is dependent on binding of ATP.

It localises to the cytoplasm. Its function is as follows. ATPase subunit of a proteasome-like degradation complex; this subunit has chaperone activity. The binding of ATP and its subsequent hydrolysis by HslU are essential for unfolding of protein substrates subsequently hydrolyzed by HslV. HslU recognizes the N-terminal part of its protein substrates and unfolds these before they are guided to HslV for hydrolysis. This is ATP-dependent protease ATPase subunit HslU from Colwellia psychrerythraea (strain 34H / ATCC BAA-681) (Vibrio psychroerythus).